A 223-amino-acid polypeptide reads, in one-letter code: Deoxyribose-phosphate aldolase (223 aa).

The Proton donor/acceptor role is filled by Asp91. The active-site Schiff-base intermediate with acetaldehyde is the Lys154. Lys183 acts as the Proton donor/acceptor in catalysis.

It belongs to the DeoC/FbaB aldolase family. DeoC type 1 subfamily.

It localises to the cytoplasm. The enzyme catalyses 2-deoxy-D-ribose 5-phosphate = D-glyceraldehyde 3-phosphate + acetaldehyde. The protein operates within carbohydrate degradation; 2-deoxy-D-ribose 1-phosphate degradation; D-glyceraldehyde 3-phosphate and acetaldehyde from 2-deoxy-alpha-D-ribose 1-phosphate: step 2/2. Its function is as follows. Catalyzes a reversible aldol reaction between acetaldehyde and D-glyceraldehyde 3-phosphate to generate 2-deoxy-D-ribose 5-phosphate. The protein is Deoxyribose-phosphate aldolase of Lysinibacillus sphaericus (strain C3-41).